Here is a 175-residue protein sequence, read N- to C-terminus: Inosine/xanthosine triphosphatase (175 aa).

T8–K13 contacts substrate. Positions 38 and 68 each coordinate Mg(2+). E68 to A69 provides a ligand contact to substrate.

Belongs to the YjjX NTPase family. In terms of assembly, homodimer. Requires Mg(2+) as cofactor. The cofactor is Mn(2+).

The catalysed reaction is XTP + H2O = XDP + phosphate + H(+). It carries out the reaction ITP + H2O = IDP + phosphate + H(+). In terms of biological role, phosphatase that hydrolyzes non-canonical purine nucleotides such as XTP and ITP to their respective diphosphate derivatives. Probably excludes non-canonical purines from DNA/RNA precursor pool, thus preventing their incorporation into DNA/RNA and avoiding chromosomal lesions. The chain is Inosine/xanthosine triphosphatase (yjjX) from Escherichia coli O127:H6 (strain E2348/69 / EPEC).